The primary structure comprises 336 residues: UDP-N-acetylenolpyruvoylglucosamine reductase (336 aa).

Residues 17-188 (LRSLAERFVE…WDVTFRLPKK (172 aa)) form the FAD-binding PCMH-type domain. The active site involves Arg-164. The active-site Proton donor is the Ser-237. Glu-332 is a catalytic residue.

It belongs to the MurB family. FAD serves as cofactor.

The protein localises to the cytoplasm. The enzyme catalyses UDP-N-acetyl-alpha-D-muramate + NADP(+) = UDP-N-acetyl-3-O-(1-carboxyvinyl)-alpha-D-glucosamine + NADPH + H(+). The protein operates within cell wall biogenesis; peptidoglycan biosynthesis. In terms of biological role, cell wall formation. In Bdellovibrio bacteriovorus (strain ATCC 15356 / DSM 50701 / NCIMB 9529 / HD100), this protein is UDP-N-acetylenolpyruvoylglucosamine reductase.